The following is a 356-amino-acid chain: 3-isopropylmalate dehydrogenase (356 aa).

Substrate is bound by residues R95, R105, R133, and D223. The Mg(2+) site is built by D223, D247, and D251. Position 281 to 293 (281 to 293 (GSAPDIAGQNKAN)) interacts with NAD(+).

Belongs to the isocitrate and isopropylmalate dehydrogenases family. LeuB type 1 subfamily. In terms of assembly, homodimer. Mg(2+) is required as a cofactor. Requires Mn(2+) as cofactor.

It is found in the cytoplasm. It catalyses the reaction (2R,3S)-3-isopropylmalate + NAD(+) = 4-methyl-2-oxopentanoate + CO2 + NADH. Its pathway is amino-acid biosynthesis; L-leucine biosynthesis; L-leucine from 3-methyl-2-oxobutanoate: step 3/4. Its function is as follows. Catalyzes the oxidation of 3-carboxy-2-hydroxy-4-methylpentanoate (3-isopropylmalate) to 3-carboxy-4-methyl-2-oxopentanoate. The product decarboxylates to 4-methyl-2 oxopentanoate. The sequence is that of 3-isopropylmalate dehydrogenase from Neisseria meningitidis serogroup B (strain ATCC BAA-335 / MC58).